The chain runs to 172 residues: Large ribosomal subunit protein uL10 (172 aa).

The protein belongs to the universal ribosomal protein uL10 family. In terms of assembly, part of the ribosomal stalk of the 50S ribosomal subunit. The N-terminus interacts with L11 and the large rRNA to form the base of the stalk. The C-terminus forms an elongated spine to which 3 L12 dimers bind in a sequential fashion forming a heptameric L10(L12)2(L12)2(L12)2 complex.

Forms part of the ribosomal stalk, playing a central role in the interaction of the ribosome with GTP-bound translation factors. The sequence is that of Large ribosomal subunit protein uL10 from Agrobacterium fabrum (strain C58 / ATCC 33970) (Agrobacterium tumefaciens (strain C58)).